Here is a 754-residue protein sequence, read N- to C-terminus: 5-methyltetrahydropteroyltriglutamate--homocysteine methyltransferase (754 aa).

Residues 17–20 and Lys-117 each bind 5-methyltetrahydropteroyltri-L-glutamate; that span reads RELK. Residues 431–433 and Glu-484 contribute to the L-homocysteine site; that span reads IGS. Residues 431 to 433 and Glu-484 each bind L-methionine; that span reads IGS. 5-methyltetrahydropteroyltri-L-glutamate-binding positions include 515 to 516 and Trp-561; that span reads RC. Asp-599 lines the L-homocysteine pocket. L-methionine is bound at residue Asp-599. Residue Glu-605 participates in 5-methyltetrahydropteroyltri-L-glutamate binding. Residues His-641, Cys-643, and Glu-665 each coordinate Zn(2+). His-694 acts as the Proton donor in catalysis. Residue Cys-726 coordinates Zn(2+).

The protein belongs to the vitamin-B12 independent methionine synthase family. The cofactor is Zn(2+).

The enzyme catalyses 5-methyltetrahydropteroyltri-L-glutamate + L-homocysteine = tetrahydropteroyltri-L-glutamate + L-methionine. It functions in the pathway amino-acid biosynthesis; L-methionine biosynthesis via de novo pathway; L-methionine from L-homocysteine (MetE route): step 1/1. Its function is as follows. Catalyzes the transfer of a methyl group from 5-methyltetrahydrofolate to homocysteine resulting in methionine formation. This Klebsiella pneumoniae subsp. pneumoniae (strain ATCC 700721 / MGH 78578) protein is 5-methyltetrahydropteroyltriglutamate--homocysteine methyltransferase.